A 118-amino-acid chain; its full sequence is Large ribosomal subunit protein bL19 (118 aa).

The protein belongs to the bacterial ribosomal protein bL19 family.

This protein is located at the 30S-50S ribosomal subunit interface and may play a role in the structure and function of the aminoacyl-tRNA binding site. The chain is Large ribosomal subunit protein bL19 from Helicobacter acinonychis (strain Sheeba).